We begin with the raw amino-acid sequence, 630 residues long: Probable potassium transport system protein Kup (630 aa).

12 helical membrane-spanning segments follow: residues 17-37 (LAIA…LYSL), 51-71 (PSAI…VVGI), 105-125 (ITGL…GDAV), 144-164 (PQLS…LFWI), 175-195 (LFGP…VYHI), 218-238 (VLLA…AEAL), 255-275 (YVLV…LLLL), 283-303 (PFFL…STVA), 344-364 (IYVP…VIGF), 374-394 (YGIA…VVMV), 402-422 (LLVA…FGAN), and 428-448 (QGGW…MTWY).

It belongs to the HAK/KUP transporter (TC 2.A.72) family.

It localises to the cell inner membrane. It carries out the reaction K(+)(in) + H(+)(in) = K(+)(out) + H(+)(out). Its function is as follows. Transport of potassium into the cell. Likely operates as a K(+):H(+) symporter. The chain is Probable potassium transport system protein Kup from Burkholderia thailandensis (strain ATCC 700388 / DSM 13276 / CCUG 48851 / CIP 106301 / E264).